The primary structure comprises 465 residues: Serine carboxypeptidase 24 (465 aa).

The signal sequence occupies residues 1 to 24; the sequence is MARTHFIFLLLVALLSTTFPSSSS. Residues N54, N105, and N139 are each glycosylated (N-linked (GlcNAc...) asparagine). Intrachain disulfides connect C88-C349, C249-C260, and C285-C317. Residue S181 is part of the active site. N-linked (GlcNAc...) asparagine glycans are attached at residues N250, N293, and N338. Residues 287-316 constitute a propeptide, linker peptide; that stretch reads AAQQKKNTTGFFVRMKNTLLRRRLVSGYDP. Active-site residues include D386 and H438.

The protein belongs to the peptidase S10 family. Heterodimer. N-glycosylated. Expressed in shoots, leaves, cauline leaves, siliques and flowers. Expressed a low levels in roots and stems.

It localises to the secreted. Its subcellular location is the extracellular space. It carries out the reaction Preferential release of a C-terminal arginine or lysine residue.. Its activity is regulated as follows. Completely inhibited by phenylmethylsulfonyl fluoride (PMSF) and partially by leupeptin. Active serine carboxypeptidase with broad substrate preference, including basic and hydrophilic groups. Processes a protein involved in an early event in the brassinosteroid signaling pathway. This Arabidopsis thaliana (Mouse-ear cress) protein is Serine carboxypeptidase 24 (SCPL24).